Reading from the N-terminus, the 136-residue chain is Transcription antitermination protein NusB (136 aa).

The protein belongs to the NusB family.

Functionally, involved in transcription antitermination. Required for transcription of ribosomal RNA (rRNA) genes. Binds specifically to the boxA antiterminator sequence of the ribosomal RNA (rrn) operons. The polypeptide is Transcription antitermination protein NusB (Pseudarthrobacter chlorophenolicus (strain ATCC 700700 / DSM 12829 / CIP 107037 / JCM 12360 / KCTC 9906 / NCIMB 13794 / A6) (Arthrobacter chlorophenolicus)).